The primary structure comprises 517 residues: Aspartyl/glutamyl-tRNA(Asn/Gln) amidotransferase subunit B (517 aa).

Belongs to the GatB/GatE family. GatB subfamily. As to quaternary structure, heterotrimer of A, B and C subunits.

It catalyses the reaction L-glutamyl-tRNA(Gln) + L-glutamine + ATP + H2O = L-glutaminyl-tRNA(Gln) + L-glutamate + ADP + phosphate + H(+). It carries out the reaction L-aspartyl-tRNA(Asn) + L-glutamine + ATP + H2O = L-asparaginyl-tRNA(Asn) + L-glutamate + ADP + phosphate + 2 H(+). In terms of biological role, allows the formation of correctly charged Asn-tRNA(Asn) or Gln-tRNA(Gln) through the transamidation of misacylated Asp-tRNA(Asn) or Glu-tRNA(Gln) in organisms which lack either or both of asparaginyl-tRNA or glutaminyl-tRNA synthetases. The reaction takes place in the presence of glutamine and ATP through an activated phospho-Asp-tRNA(Asn) or phospho-Glu-tRNA(Gln). The chain is Aspartyl/glutamyl-tRNA(Asn/Gln) amidotransferase subunit B from Thermobifida fusca (strain YX).